A 176-amino-acid chain; its full sequence is NAD(P)H-quinone oxidoreductase subunit 6, chloroplastic (176 aa).

5 consecutive transmembrane segments (helical) span residues 10-30, 33-53, 60-80, 95-115, and 152-172; these read ILVL…VLLT, IYSA…YFLL, VAQL…AVMF, IGDG…MTTI, and FYLP…GAIT.

Belongs to the complex I subunit 6 family. As to quaternary structure, NDH is composed of at least 16 different subunits, 5 of which are encoded in the nucleus.

It localises to the plastid. It is found in the chloroplast thylakoid membrane. The catalysed reaction is a plastoquinone + NADH + (n+1) H(+)(in) = a plastoquinol + NAD(+) + n H(+)(out). The enzyme catalyses a plastoquinone + NADPH + (n+1) H(+)(in) = a plastoquinol + NADP(+) + n H(+)(out). In terms of biological role, NDH shuttles electrons from NAD(P)H:plastoquinone, via FMN and iron-sulfur (Fe-S) centers, to quinones in the photosynthetic chain and possibly in a chloroplast respiratory chain. The immediate electron acceptor for the enzyme in this species is believed to be plastoquinone. Couples the redox reaction to proton translocation, and thus conserves the redox energy in a proton gradient. This is NAD(P)H-quinone oxidoreductase subunit 6, chloroplastic (ndhG) from Saccharum hybrid (Sugarcane).